Consider the following 189-residue polypeptide: UPF0398 protein lhv_1265 (189 aa).

It belongs to the UPF0398 family.

In Lactobacillus helveticus (strain DPC 4571), this protein is UPF0398 protein lhv_1265.